The following is a 450-amino-acid chain: Sorting nexin-4 (450 aa).

Met1 carries the N-acetylmethionine modification. Residues 1-46 (MEQAPPDPERQLQPAPLEPLGSPDAVLGAAVGKETEGAGEESSGVD) form a disordered region. Ser22 is subject to Phosphoserine. Residues 61–187 (SVSEAEKRTG…YLFLTQEGNW (127 aa)) form the PX domain. A 1,2-diacyl-sn-glycero-3-phospho-(1D-myo-inositol-3-phosphate) is bound by residues Arg106, Ser108, Lys132, and Arg154.

This sequence belongs to the sorting nexin family. In terms of assembly, heterodimer; heterodimerizes with SNX7 or SNX30. Interacts with WWC1/KIBRA. Identified in a complex with WWC1/KIBRA and dynein components DYNLL1 and DYNC1I2. Interacts with BIN1.

The protein resides in the early endosome. It is found in the early endosome membrane. In terms of biological role, involved in the regulation of endocytosis and in several stages of intracellular trafficking. Plays a role in recycling endocytosed transferrin receptor and prevent its degradation. Involved in autophagosome assembly by regulating trafficking and recycling of phospholipid scramblase ATG9A. This chain is Sorting nexin-4, found in Pongo abelii (Sumatran orangutan).